We begin with the raw amino-acid sequence, 279 residues long: Pantothenate synthetase (279 aa).

26 to 33 (MGNLHEGH) provides a ligand contact to ATP. The active-site Proton donor is His33. A (R)-pantoate-binding site is contributed by Gln57. Beta-alanine is bound at residue Gln57. 144–147 (GKKD) provides a ligand contact to ATP. Gln150 lines the (R)-pantoate pocket. ATP is bound by residues Val173 and 181–184 (LSSR).

Belongs to the pantothenate synthetase family. Homodimer.

The protein resides in the cytoplasm. The catalysed reaction is (R)-pantoate + beta-alanine + ATP = (R)-pantothenate + AMP + diphosphate + H(+). It participates in cofactor biosynthesis; (R)-pantothenate biosynthesis; (R)-pantothenate from (R)-pantoate and beta-alanine: step 1/1. Catalyzes the condensation of pantoate with beta-alanine in an ATP-dependent reaction via a pantoyl-adenylate intermediate. The chain is Pantothenate synthetase from Burkholderia ambifaria (strain ATCC BAA-244 / DSM 16087 / CCUG 44356 / LMG 19182 / AMMD) (Burkholderia cepacia (strain AMMD)).